Reading from the N-terminus, the 620-residue chain is Chaperone protein HscA homolog (620 aa).

The protein belongs to the heat shock protein 70 family.

Functionally, chaperone involved in the maturation of iron-sulfur cluster-containing proteins. Has a low intrinsic ATPase activity which is markedly stimulated by HscB. The polypeptide is Chaperone protein HscA homolog (Shewanella sp. (strain MR-4)).